A 605-amino-acid chain; its full sequence is Elongation factor 4 (605 aa).

Residues 4–181 form the tr-type G domain; that stretch reads NKIKTFSIIA…AIVEYVPSPL (178 aa). GTP contacts are provided by residues 16–21 and 128–131; these read DHGKST and NKVD.

Belongs to the TRAFAC class translation factor GTPase superfamily. Classic translation factor GTPase family. LepA subfamily.

The protein resides in the cell membrane. The enzyme catalyses GTP + H2O = GDP + phosphate + H(+). Its function is as follows. Required for accurate and efficient protein synthesis under certain stress conditions. May act as a fidelity factor of the translation reaction, by catalyzing a one-codon backward translocation of tRNAs on improperly translocated ribosomes. Back-translocation proceeds from a post-translocation (POST) complex to a pre-translocation (PRE) complex, thus giving elongation factor G a second chance to translocate the tRNAs correctly. Binds to ribosomes in a GTP-dependent manner. In Mycoplasmopsis synoviae (strain 53) (Mycoplasma synoviae), this protein is Elongation factor 4.